The chain runs to 427 residues: Peptidyl-prolyl cis-trans isomerase sig-7 (427 aa).

Residues 6 to 161 (ETTLGDLIID…KDIRISHTIV (156 aa)) form the PPIase cyclophilin-type domain. Residues 195-227 (DEKEDEDEGKTAEEIAEELQQREMAEQAQILEM) adopt a coiled-coil conformation. The RRM domain maps to 241–319 (NVLFVCKLNP…RRIHVDFSQS (79 aa)). The span at 322–334 (QNYKYKPKSQQQE) shows a compositional bias: polar residues. The tract at residues 322–427 (QNYKYKPKSQ…RSPDRRRDRR (106 aa)) is disordered. Basic residues predominate over residues 351–370 (SHQRSPSPRRRRSPSPKKDK). The segment covering 384-427 (SSDNHRDRDRSYRDNNRDRRDNHRDSDRDRRRHDRSPDRRRDRR) has biased composition (basic and acidic residues).

Belongs to the cyclophilin-type PPIase family. PPIL4 subfamily. In terms of assembly, interacts with ama-1, the catalytic subunit of the RNA polymerase II (RNA pol II) complex. Ubiquitous.

Its subcellular location is the nucleus. The protein resides in the nucleoplasm. The protein localises to the chromosome. The catalysed reaction is [protein]-peptidylproline (omega=180) = [protein]-peptidylproline (omega=0). Its function is as follows. Probable PPIase that accelerates the folding of proteins. It catalyzes the cis-trans isomerization of proline imidic peptide bonds in oligopeptides. Involved in RNA polymerase II (RNA pol II)-mediated transcription elongation, and in primary transcript splicing, including co-transcriptional trans-splicing, in association with the catalytic subunit of the RNA pol II complex ama-1. Also plays a role in the regulation of elongation-dependent phosphorylation of ama-1 to control transcription. Involved in the transcription of several genes during embryogenesis and in particular, of genes related to developmental processes such as gastrulation, and also regulates transcription in germ cells from embryogenesis to adulthood. This chain is Peptidyl-prolyl cis-trans isomerase sig-7, found in Caenorhabditis elegans.